We begin with the raw amino-acid sequence, 513 residues long: MEEFKRYLELDRSQQHDFIYPLIFQESIYALAHDHGLNRSLLLENEGYDNKSSLLIVKRLITHLITQMYQQNRFIFSANDSNQNHFLGHNTNLYSQIILEGFAVVVEIPFSLRLISSLEGKEIVKSHNLRSIHSIFPFLEDKISHLNYVLDILIPHSIHLEILVQTLRYWVKDASSLHLLRFFLHEYRNWNSLITPNKSSFSFSKRNQRLFLFLYNFHVCEYESIFVFLRNQSSHLRSISSGTFLERIYFYRKIEHFVFVEVFTKDFQTVLWLFKDPFLHYVRYQGKSLLAAKGASLLMNKWKYYFVNFWQCYFSMWSQPRRIHINPLSNHSLDFLGYLSSMRLNPSMVRSQMLENSVLLGNAIKKFDTTVPITPLIGSLSKAKFCNVLGHPLSKPAWADLSDSDIIDRFGCIYRNLSHYHSGSLKKKSLYQIKYILRLSCARTLARKHKSTVRAFLKRLGVELLEEFFTEEEQVFYLTFPKASSPSRGLYRIYRKRVWYLDIICINDLANHS.

The protein belongs to the intron maturase 2 family. MatK subfamily.

It is found in the plastid. The protein localises to the chloroplast. Functionally, usually encoded in the trnK tRNA gene intron. Probably assists in splicing its own and other chloroplast group II introns. The sequence is that of Maturase K from Cyrilla racemiflora (Swamp titi).